Consider the following 92-residue polypeptide: Small ribosomal subunit protein uS19c (92 aa).

It belongs to the universal ribosomal protein uS19 family.

It is found in the plastid. Its subcellular location is the chloroplast. Functionally, protein S19 forms a complex with S13 that binds strongly to the 16S ribosomal RNA. The sequence is that of Small ribosomal subunit protein uS19c from Physcomitrium patens (Spreading-leaved earth moss).